The primary structure comprises 289 residues: Oxaloacetate decarboxylase 1 (289 aa).

Substrate is bound at residue Ser-50. Mg(2+) is bound at residue Asp-88. The substrate site is built by Arg-159 and His-235.

Belongs to the isocitrate lyase/PEP mutase superfamily. Oxaloacetate decarboxylase family. In terms of assembly, homotetramer; dimer of dimers. The cofactor is Mg(2+).

It catalyses the reaction oxaloacetate + H(+) = pyruvate + CO2. Catalyzes the decarboxylation of oxaloacetate into pyruvate. Seems to play a role in maintaining cellular concentrations of bicarbonate and pyruvate. In Pseudomonas fluorescens (strain Pf0-1), this protein is Oxaloacetate decarboxylase 1.